The chain runs to 1426 residues: Homeobox protein cut-like 2 (1426 aa).

Residues 77-104 (PEPPSAREQNEGTCPTGHTPANGNHLPG) are disordered. Residue Ser-81 is modified to Phosphoserine. Residues 131–311 (ITLAARLGEA…IKTELSILRA (181 aa)) are a coiled coil. Disordered regions lie at residues 351–419 (ALLA…FPSL), 460–488 (KPPSAPAASVPCPEPTGAPEAVDGAGPEE), 599–628 (EIESQKGGESKNSPASVSIPNGTASSSTSE), 653–676 (ESGPRGRSVPPSPPERPSPATASQ), 743–769 (YASVSPSLSSSSSYSGQPNGRAWPRGD), and 904–977 (LGQG…SSSQ). Over residues 374–395 (PPYPPQLPPPPGPEDPLSPSPA) the composition is skewed to pro residues. Composition is skewed to low complexity over residues 397–408 (PLLGPSLGPDGP) and 460–470 (KPPSAPAASVP). The CUT 1 DNA-binding region spans 482–569 (DGAGPEEEQL…VLALRTIQVR (88 aa)). A coiled-coil region spans residues 587-655 (DAIKSILEQA…QQALLEMESG (69 aa)). The segment covering 608–628 (SKNSPASVSIPNGTASSSTSE) has biased composition (polar residues). Low complexity-rich tracts occupy residues 743–757 (YASVSPSLSSSSSYS), 910–928 (QAPTQQPSASQASPTEPTS), and 965–976 (SSSLGGKPFSSS). The segment at residues 828-915 (QYELYMYREV…QGQGQAPTQQ (88 aa)) is a DNA-binding region (CUT 2). Positions 983 to 1070 (QEMVAMSPEL…VEKLRDMKKL (88 aa)) form a DNA-binding region, CUT 3. Residues 1113–1172 (AKKPRVVLAPAEKEALRKAYQLEPYPSQQTIELLSFQLNLKTNTVINWFHNYRSRMRREM) constitute a DNA-binding region (homeobox). A disordered region spans residues 1177–1392 (TQDDPDFDPS…AALHPSTKVN (216 aa)). Composition is skewed to basic and acidic residues over residues 1233–1245 (APDRALVKIKQEE) and 1260–1274 (DPDRGQDGPKEEHTH). Residues 1318 to 1332 (LSFKSTSESSCCSLE) are compositionally biased toward low complexity. A compositionally biased stretch (polar residues) spans 1338–1350 (PSVISSPDLTTCV). Positions 1351-1364 (SPAPSSSAPISPSL) are enriched in low complexity.

The protein belongs to the CUT homeobox family. As to expression, restricted to neural tissues. Expressed exclusively in the central and peripheral nervous systems.

It is found in the nucleus. In terms of biological role, transcription factor involved in the control of neuronal proliferation and differentiation in the brain. Regulates dendrite development and branching, dendritic spine formation, and synaptogenesis in cortical layers II-III. Binds to DNA in a sequence-specific manner. This is Homeobox protein cut-like 2 (Cux2) from Mus musculus (Mouse).